Reading from the N-terminus, the 184-residue chain is UPF0397 protein SAR2767 (184 aa).

5 helical membrane passes run 11 to 31, 44 to 64, 77 to 97, 117 to 137, and 148 to 168; these read VVAIGIGAAVFVILGRFVVIP, AFLALISAIFGPFAGLMTGLI, AWWSWVICSGIIGCLYGWIGL, GQIIANIICWALIAPTLDILI, and QGVISAVLNIISVGIIGTILL.

Belongs to the UPF0397 family.

Its subcellular location is the cell membrane. This chain is UPF0397 protein SAR2767, found in Staphylococcus aureus (strain MRSA252).